A 113-amino-acid chain; its full sequence is uncharacterized protein (113 aa).

This is an uncharacterized protein from Ureaplasma parvum serovar 3 (strain ATCC 700970).